The primary structure comprises 160 residues: Crossover junction endodeoxyribonuclease RuvC (160 aa).

Active-site residues include aspartate 7, glutamate 67, and aspartate 138. Positions 7, 67, and 138 each coordinate Mg(2+).

It belongs to the RuvC family. Homodimer which binds Holliday junction (HJ) DNA. The HJ becomes 2-fold symmetrical on binding to RuvC with unstacked arms; it has a different conformation from HJ DNA in complex with RuvA. In the full resolvosome a probable DNA-RuvA(4)-RuvB(12)-RuvC(2) complex forms which resolves the HJ. Requires Mg(2+) as cofactor.

Its subcellular location is the cytoplasm. It carries out the reaction Endonucleolytic cleavage at a junction such as a reciprocal single-stranded crossover between two homologous DNA duplexes (Holliday junction).. In terms of biological role, the RuvA-RuvB-RuvC complex processes Holliday junction (HJ) DNA during genetic recombination and DNA repair. Endonuclease that resolves HJ intermediates. Cleaves cruciform DNA by making single-stranded nicks across the HJ at symmetrical positions within the homologous arms, yielding a 5'-phosphate and a 3'-hydroxyl group; requires a central core of homology in the junction. The consensus cleavage sequence is 5'-(A/T)TT(C/G)-3'. Cleavage occurs on the 3'-side of the TT dinucleotide at the point of strand exchange. HJ branch migration catalyzed by RuvA-RuvB allows RuvC to scan DNA until it finds its consensus sequence, where it cleaves and resolves the cruciform DNA. The polypeptide is Crossover junction endodeoxyribonuclease RuvC (Brachyspira hyodysenteriae (strain ATCC 49526 / WA1)).